We begin with the raw amino-acid sequence, 481 residues long: Thyroid receptor-interacting protein 6 (481 aa).

Pro residues predominate over residues Met-1–Pro-12. The tract at residues Met-1–Glu-259 is disordered. Arg-25 is subject to Asymmetric dimethylarginine; alternate. Residue Arg-25 is modified to Omega-N-methylarginine; alternate. Tyr-55 is modified (phosphotyrosine; by SRC). Ser-92 carries the post-translational modification Phosphoserine. Basic and acidic residues predominate over residues Asp-108–Ala-122. An Omega-N-methylarginine modification is found at Arg-111. Composition is skewed to low complexity over residues Ser-153 to Ala-173 and Pro-183 to Gly-193. Arg-185 and Arg-192 each carry omega-N-methylarginine. At Ser-195 the chain carries Phosphoserine. Arg-211 carries the omega-N-methylarginine modification. The segment covering Ser-221–Ala-233 has biased composition (basic and acidic residues). Residue Arg-243 is modified to Omega-N-methylarginine. Position 254 is a phosphoserine (Ser-254). LIM zinc-binding domains are found at residues Cys-284–Gly-321, Cys-344–Arg-403, and Cys-404–Glu-472. Residues Ser-474 to Cys-481 form an interaction with MAGI1 and PTPN13 region.

This sequence belongs to the zyxin/ajuba family. In terms of assembly, specifically interacts with the ligand binding domain of the thyroid receptor (TR) in the presence of thyroid hormone. Interacts (via the third LIM domain and C-terminus) with PTPN13 (via the second PDZ domain). Interacts (via the second LIM domain or via the third LIM domain plus C-terminus) with PDLIM4 (via PDZ domain). Found in a complex with PTPN13 and PDLIM4. Interacts with SVIL isoform 2. Interacts with LPAR2 but not other LPA receptors. Interacts with PRKAA2. Interacts with MAGI1. Interacts with SCRIB. Post-translationally, phosphorylation at Tyr-55 by SRC is required for enhancement of lysophosphatidic acid-induced cell migration. Tyr-55 is dephosphorylated by PTPN13.

The protein localises to the cytoplasm. Its subcellular location is the cytoskeleton. It localises to the cell junction. It is found in the focal adhesion. The protein resides in the nucleus. In terms of biological role, relays signals from the cell surface to the nucleus to weaken adherens junction and promote actin cytoskeleton reorganization and cell invasiveness. Involved in lysophosphatidic acid-induced cell adhesion and migration. Acts as a transcriptional coactivator for NF-kappa-B and JUN, and mediates the transrepression of these transcription factors induced by glucocorticoid receptor. The chain is Thyroid receptor-interacting protein 6 (TRIP6) from Bos taurus (Bovine).